A 500-amino-acid chain; its full sequence is 4-aminobutyrate aminotransferase, mitochondrial (500 aa).

The N-terminal 27 residues, 1–27, are a transit peptide targeting the mitochondrion; sequence MAFLLTTRRLVCSSQKNLHLFTPGSRY. Position 163 (Cys-163) interacts with [2Fe-2S] cluster. Pyridoxal 5'-phosphate is bound at residue 164-165; the sequence is GS. Cys-166 serves as a coordination point for [2Fe-2S] cluster. Position 220 (Arg-220) interacts with substrate. Lys-231 carries the post-translational modification N6-succinyllysine. Lys-252 is modified (N6-acetyllysine; alternate). Lys-252 is modified (N6-succinyllysine; alternate). Lys-279 and Lys-318 each carry N6-acetyllysine. Lys-357 bears the N6-(pyridoxal phosphate)lysine mark. Residue Thr-381 coordinates pyridoxal 5'-phosphate. N6-acetyllysine; alternate is present on Lys-413. Lys-413 is modified (N6-succinyllysine; alternate). N6-acetyllysine occurs at positions 452 and 470.

This sequence belongs to the class-III pyridoxal-phosphate-dependent aminotransferase family. As to quaternary structure, homodimer; disulfide-linked. It depends on pyridoxal 5'-phosphate as a cofactor. The cofactor is [2Fe-2S] cluster.

The protein resides in the mitochondrion matrix. It catalyses the reaction 4-aminobutanoate + 2-oxoglutarate = succinate semialdehyde + L-glutamate. The enzyme catalyses (S)-3-amino-2-methylpropanoate + 2-oxoglutarate = 2-methyl-3-oxopropanoate + L-glutamate. Functionally, catalyzes the conversion of gamma-aminobutyrate and L-beta-aminoisobutyrate to succinate semialdehyde and methylmalonate semialdehyde, respectively. Can also convert delta-aminovalerate and beta-alanine. The chain is 4-aminobutyrate aminotransferase, mitochondrial from Rattus norvegicus (Rat).